The primary structure comprises 989 residues: DEAD-box ATP-dependent RNA helicase 45 (989 aa).

Composition is skewed to basic and acidic residues over residues 1-39 (MLEK…KRCD) and 64-101 (RDSK…EKEK). 2 disordered regions span residues 1-248 (MLEK…AADE) and 305-330 (QGED…DDEE). A coiled-coil region spans residues 88 to 182 (LKRDRERRER…ELKRQNEEAQ (95 aa)). S119 is modified (phosphoserine). Residues 134 to 179 (SRHGDDDVEKKTRDEQVEDEQKQLAEEVEKRRRRVQEWQELKRQNE) show a composition bias toward basic and acidic residues. The residue at position 200 (S200) is a Phosphoserine. Over residues 203 to 222 (EVKSDSEMDVDRDTKLENGG) the composition is skewed to basic and acidic residues. Residues 230 to 239 (ENETAVTVSE) show a composition bias toward polar residues. Over residues 321 to 330 (DPSLDEDDEE) the composition is skewed to acidic residues. Positions 396 to 424 (QFWHQTGLTSKILDTLKKLNYEKPMPIQA) match the Q motif motif. Residues 427–605 (LPIIMSGRDC…RKVLNKPVEI (179 aa)) form the Helicase ATP-binding domain. 440 to 447 (AKTGSGKT) serves as a coordination point for ATP. The short motif at 553–556 (DEAD) is the DEAD box element. A Helicase C-terminal domain is found at 590–748 (QVETLARKVL…PVPDDVKAVA (159 aa)).

The protein belongs to the DEAD box helicase family. DDX46/PRP5 subfamily.

It carries out the reaction ATP + H2O = ADP + phosphate + H(+). The sequence is that of DEAD-box ATP-dependent RNA helicase 45 (RH45) from Arabidopsis thaliana (Mouse-ear cress).